The sequence spans 62 residues: uncharacterized protein (62 aa).

A compositionally biased stretch (polar residues) spans 1–18 (MTTNRVDPLEQTSPNTPT). The segment at 1-24 (MTTNRVDPLEQTSPNTPTSKREKA) is disordered.

This is an uncharacterized protein from Rickettsia conorii (strain ATCC VR-613 / Malish 7).